We begin with the raw amino-acid sequence, 249 residues long: Molybdate/tungstate transport system permease protein WtpB (249 aa).

At 1–10 (MDRRDYLAYA) the chain is on the cytoplasmic side. Residues 11-31 (FAGLGAFLVAFIGLPLFMIFI) form a helical membrane-spanning segment. Residues 32–56 (KQAYDLEALQRTLVDPLVIESIRNS) are Extracellular-facing. The ABC transmembrane type-1 domain occupies 53–239 (IRNSLFTATV…TISLAVFIFL (187 aa)). A helical membrane pass occupies residues 57 to 77 (LFTATVSTLLGILFGVPLGYV). Topologically, residues 78–96 (LARKEFKGKNFVQALIDTP) are cytoplasmic. The helical transmembrane segment at 97–117 (IVIPHSVVGIMLLVTFSDAIL) threads the bilayer. Position 118 (Asp-118) is a topological domain, extracellular. The helical transmembrane segment at 119–139 (NYKGIVAVMLFVSSPFIVNSA) threads the bilayer. Residues 140–179 (RDGFLSVDEKLEYVARTLGASGLRTFFSVTLPNAIHSIAS) are Cytoplasmic-facing. Residues 180-200 (GAIMAWARAISEVGAILIVAY) traverse the membrane as a helical segment. Residues 201–223 (YPKTAQVLIMEYFNNYGLRASRP) lie on the Extracellular side of the membrane. The helical transmembrane segment at 224 to 244 (IAVILVTISLAVFIFLRWLVG) threads the bilayer. The Cytoplasmic portion of the chain corresponds to 245–249 (RGRNA).

The protein belongs to the binding-protein-dependent transport system permease family. The complex is composed of two ATP-binding proteins (WtpC), two transmembrane proteins (WtpB) and a solute-binding protein (WtpA).

It localises to the cell membrane. Its function is as follows. Part of the ABC transporter complex WtpABC involved in molybdate/tungstate import. Probably responsible for the translocation of the substrate across the membrane. This Pyrococcus furiosus (strain ATCC 43587 / DSM 3638 / JCM 8422 / Vc1) protein is Molybdate/tungstate transport system permease protein WtpB.